The sequence spans 526 residues: Phenylacetaldehyde oxime monooxygenase CYP71AN24 (526 aa).

A helical membrane pass occupies residues 22–42; the sequence is SFNIFLVPILCLSIFILFSLT. A heme-binding site is contributed by Cys-465.

Belongs to the cytochrome P450 family. The cofactor is heme. Expressed in seedlings and leaves.

The protein resides in the membrane. The enzyme catalyses (E)-phenylacetaldehyde oxime + reduced [NADPH--hemoprotein reductase] + O2 = (R)-mandelonitrile + oxidized [NADPH--hemoprotein reductase] + 2 H2O + H(+). The catalysed reaction is phenylacetonitrile + reduced [NADPH--hemoprotein reductase] + O2 = (R)-mandelonitrile + oxidized [NADPH--hemoprotein reductase] + H2O + H(+). Functionally, involved in L-phenylalanine-derived cyanogenic glycoside biosynthesis, including prunasin and amygdalin defensive agents. Catalyzes the conversion of phenylacetaldoxime (PAOx) and phenylacetonitrile (PAN) into mandelonitrile (MAN). To a lower extent, can convert various aromatic aldoximes and nitriles; mediates the transformation of 4-hydroxyphenylacetaldoxime, 4-hydroxyphenylacetonitrile, indole-3-acetal-doxime and indole-3-acetonitrile into the corresponding hydroxynitriles, but cannot use the aliphatic compounds 2-methylpropanaloxime and 2-methylpropanenitrile as substrates. The chain is Phenylacetaldehyde oxime monooxygenase CYP71AN24 from Prunus mume (Japanese apricot).